A 206-amino-acid polypeptide reads, in one-letter code: Small ribosomal subunit protein uS4 (206 aa).

The region spanning 96 to 156 (GRLDNVVYRM…EKSKKQARIK (61 aa)) is the S4 RNA-binding domain.

This sequence belongs to the universal ribosomal protein uS4 family. As to quaternary structure, part of the 30S ribosomal subunit. Contacts protein S5. The interaction surface between S4 and S5 is involved in control of translational fidelity.

Its function is as follows. One of the primary rRNA binding proteins, it binds directly to 16S rRNA where it nucleates assembly of the body of the 30S subunit. In terms of biological role, with S5 and S12 plays an important role in translational accuracy. The polypeptide is Small ribosomal subunit protein uS4 (Haemophilus influenzae (strain ATCC 51907 / DSM 11121 / KW20 / Rd)).